Consider the following 607-residue polypeptide: Elongation factor 4 (607 aa).

A tr-type G domain is found at 11–193 (SKIRNFSIIA…QIVEKVPAPT (183 aa)). Residues 23–28 (DHGKST) and 140–143 (NKID) contribute to the GTP site.

Belongs to the TRAFAC class translation factor GTPase superfamily. Classic translation factor GTPase family. LepA subfamily.

It is found in the cell membrane. It catalyses the reaction GTP + H2O = GDP + phosphate + H(+). In terms of biological role, required for accurate and efficient protein synthesis under certain stress conditions. May act as a fidelity factor of the translation reaction, by catalyzing a one-codon backward translocation of tRNAs on improperly translocated ribosomes. Back-translocation proceeds from a post-translocation (POST) complex to a pre-translocation (PRE) complex, thus giving elongation factor G a second chance to translocate the tRNAs correctly. Binds to ribosomes in a GTP-dependent manner. In Bacillus anthracis (strain A0248), this protein is Elongation factor 4.